Reading from the N-terminus, the 706-residue chain is Fatty acid oxidation complex subunit alpha (706 aa).

The interval 1–188 is enoyl-CoA hydratase; that stretch reads MEKTFNLTRR…KMGLVNDVVP (188 aa). The tract at residues 308-706 is 3-hydroxyacyl-CoA dehydrogenase; the sequence is RKVKKAVILG…TMAQENAHFF (399 aa).

In the N-terminal section; belongs to the enoyl-CoA hydratase/isomerase family. The protein in the central section; belongs to the 3-hydroxyacyl-CoA dehydrogenase family. Heterotetramer of two alpha chains (FadJ) and two beta chains (FadI).

It localises to the cytoplasm. The catalysed reaction is a (3S)-3-hydroxyacyl-CoA = a (2E)-enoyl-CoA + H2O. It carries out the reaction a 4-saturated-(3S)-3-hydroxyacyl-CoA = a (3E)-enoyl-CoA + H2O. The enzyme catalyses a (3S)-3-hydroxyacyl-CoA + NAD(+) = a 3-oxoacyl-CoA + NADH + H(+). It catalyses the reaction (3S)-3-hydroxybutanoyl-CoA = (3R)-3-hydroxybutanoyl-CoA. The protein operates within lipid metabolism; fatty acid beta-oxidation. Functionally, catalyzes the formation of a hydroxyacyl-CoA by addition of water on enoyl-CoA. Also exhibits 3-hydroxyacyl-CoA epimerase and 3-hydroxyacyl-CoA dehydrogenase activities. This chain is Fatty acid oxidation complex subunit alpha, found in Shewanella baltica (strain OS185).